A 63-amino-acid polypeptide reads, in one-letter code: Large ribosomal subunit protein bL28 (63 aa).

This sequence belongs to the bacterial ribosomal protein bL28 family.

The polypeptide is Large ribosomal subunit protein bL28 (Clostridium kluyveri (strain NBRC 12016)).